A 529-amino-acid polypeptide reads, in one-letter code: MSKQQKKEVEQRRCFGIISHPDAGKTTLTEKFLLFGGAIQLAGAVKARKAARHATSDWMSIERDRGISVTTSVMTFSYRDFFINLLDTPGHQDFSEDTYRVLTAVDSALMVIDSAKGVEAQTEKLMEVCRMRNTPIITFINKMDRDGMAPLDLLSDIEEKLQIECAPLTWPIGAGKGFAGVYNLYKKELQLFTAGGKTRQKDGIVIQDLDDPKLAELIGESKAEELREDIELLEGAANPFEMEHYLSGSQTPVFFGSAINNFGITELLDALVEMAPAPGLRPAESRDVSPLEEDFSGFTFKIQANMDPAHRDRIAFVRICSGKFNRGMKVMHHRIGKEMIISNATMFMAQDRANVEEAWPGDIIGVHNHGTIKIGDTFTIKEPLKFTGIPNFAPEHFRRVMLKDPMKAKQLNKGLTQLAEEGAVQVFRPLTSADNILGAVGVLQFDVTMARLKAEYNVDCIYEAIDYNTARWVECPDNKMLDEFRKANQANLALDGEGQLAYLAPSQWRLGFVQENWPDVVFHKTREYN.

The tr-type G domain occupies 10–279 (EQRRCFGIIS…ALVEMAPAPG (270 aa)). GTP contacts are provided by residues 19-26 (SHPDAGKT), 87-91 (DTPGH), and 141-144 (NKMD).

It belongs to the TRAFAC class translation factor GTPase superfamily. Classic translation factor GTPase family. PrfC subfamily.

The protein resides in the cytoplasm. Increases the formation of ribosomal termination complexes and stimulates activities of RF-1 and RF-2. It binds guanine nucleotides and has strong preference for UGA stop codons. It may interact directly with the ribosome. The stimulation of RF-1 and RF-2 is significantly reduced by GTP and GDP, but not by GMP. The chain is Peptide chain release factor 3 from Desulfatibacillum aliphaticivorans.